The following is a 508-amino-acid chain: ATP synthase subunit alpha (508 aa).

Position 169–176 (169–176) interacts with ATP; sequence GDRQTGKT.

This sequence belongs to the ATPase alpha/beta chains family. As to quaternary structure, F-type ATPases have 2 components, CF(1) - the catalytic core - and CF(0) - the membrane proton channel. CF(1) has five subunits: alpha(3), beta(3), gamma(1), delta(1), epsilon(1). CF(0) has three main subunits: a(1), b(2) and c(9-12). The alpha and beta chains form an alternating ring which encloses part of the gamma chain. CF(1) is attached to CF(0) by a central stalk formed by the gamma and epsilon chains, while a peripheral stalk is formed by the delta and b chains.

Its subcellular location is the cell inner membrane. It carries out the reaction ATP + H2O + 4 H(+)(in) = ADP + phosphate + 5 H(+)(out). Functionally, produces ATP from ADP in the presence of a proton gradient across the membrane. The alpha chain is a regulatory subunit. This Allorhizobium ampelinum (strain ATCC BAA-846 / DSM 112012 / S4) (Agrobacterium vitis (strain S4)) protein is ATP synthase subunit alpha.